We begin with the raw amino-acid sequence, 284 residues long: D-tagatose-1,6-bisphosphate aldolase subunit GatY (284 aa).

The Proton donor role is filled by Asp-82. Positions 83 and 180 each coordinate Zn(2+). Gly-181 serves as a coordination point for dihydroxyacetone phosphate. Position 208 (His-208) interacts with Zn(2+). Dihydroxyacetone phosphate contacts are provided by residues 209-211 (GAS) and 230-233 (NVAT).

Belongs to the class II fructose-bisphosphate aldolase family. TagBP aldolase GatY subfamily. As to quaternary structure, forms a complex with GatZ. The cofactor is Zn(2+).

The enzyme catalyses D-tagatofuranose 1,6-bisphosphate = D-glyceraldehyde 3-phosphate + dihydroxyacetone phosphate. The protein operates within carbohydrate metabolism; D-tagatose 6-phosphate degradation; D-glyceraldehyde 3-phosphate and glycerone phosphate from D-tagatose 6-phosphate: step 2/2. Functionally, catalytic subunit of the tagatose-1,6-bisphosphate aldolase GatYZ, which catalyzes the reversible aldol condensation of dihydroxyacetone phosphate (DHAP or glycerone-phosphate) with glyceraldehyde 3-phosphate (G3P) to produce tagatose 1,6-bisphosphate (TBP). Requires GatZ subunit for full activity and stability. Is involved in the catabolism of galactitol. The chain is D-tagatose-1,6-bisphosphate aldolase subunit GatY from Shigella boydii serotype 4 (strain Sb227).